The chain runs to 361 residues: Inactive 2'-5'-oligoadenylate synthase 1D (361 aa).

It belongs to the 2-5A synthase family. As to quaternary structure, interacts with OAS1A, the interaction inhibits OAS1A catalytic activity. Expressed specifically in oocytes (at protein level). Expressed at highest level in ovary with lesser amounts in intestine, brain, thymus lung, kidney, liver and uterus.

The protein localises to the cytoplasm. Does not have 2'-5'-oligoadenylate synthetase activity, but can bind double-stranded RNA. May play a role in the control of female fertility, possibly by binding to and inhibiting OAS1A. The protein is Inactive 2'-5'-oligoadenylate synthase 1D of Mus musculus (Mouse).